Reading from the N-terminus, the 81-residue chain is 8.6 kDa transglutaminase substrate (81 aa).

As to quaternary structure, multimeric. As to expression, hemolymph; Hemocyte.

This chain is 8.6 kDa transglutaminase substrate, found in Tachypleus tridentatus (Japanese horseshoe crab).